Reading from the N-terminus, the 249-residue chain is 1-(5-phosphoribosyl)-5-[(5-phosphoribosylamino)methylideneamino] imidazole-4-carboxamide isomerase (249 aa).

Asp10 acts as the Proton acceptor in catalysis. Asp131 serves as the catalytic Proton donor.

The protein belongs to the HisA/HisF family.

The protein localises to the cytoplasm. The catalysed reaction is 1-(5-phospho-beta-D-ribosyl)-5-[(5-phospho-beta-D-ribosylamino)methylideneamino]imidazole-4-carboxamide = 5-[(5-phospho-1-deoxy-D-ribulos-1-ylimino)methylamino]-1-(5-phospho-beta-D-ribosyl)imidazole-4-carboxamide. Its pathway is amino-acid biosynthesis; L-histidine biosynthesis; L-histidine from 5-phospho-alpha-D-ribose 1-diphosphate: step 4/9. This Brevibacillus brevis (strain 47 / JCM 6285 / NBRC 100599) protein is 1-(5-phosphoribosyl)-5-[(5-phosphoribosylamino)methylideneamino] imidazole-4-carboxamide isomerase.